The sequence spans 333 residues: Glycerol-3-phosphate dehydrogenase [NAD(P)+] (333 aa).

5 residues coordinate NADPH: S10, W11, H31, R32, and K105. K105, G136, and S138 together coordinate sn-glycerol 3-phosphate. Position 140 (A140) interacts with NADPH. Sn-glycerol 3-phosphate-binding residues include K191, D244, S254, R255, and N256. Catalysis depends on K191, which acts as the Proton acceptor. R255 is an NADPH binding site. Residues I279 and E281 each contribute to the NADPH site.

Belongs to the NAD-dependent glycerol-3-phosphate dehydrogenase family.

Its subcellular location is the cytoplasm. It carries out the reaction sn-glycerol 3-phosphate + NAD(+) = dihydroxyacetone phosphate + NADH + H(+). The enzyme catalyses sn-glycerol 3-phosphate + NADP(+) = dihydroxyacetone phosphate + NADPH + H(+). It participates in membrane lipid metabolism; glycerophospholipid metabolism. Catalyzes the reduction of the glycolytic intermediate dihydroxyacetone phosphate (DHAP) to sn-glycerol 3-phosphate (G3P), the key precursor for phospholipid synthesis. This is Glycerol-3-phosphate dehydrogenase [NAD(P)+] from Chlorobium chlorochromatii (strain CaD3).